A 176-amino-acid chain; its full sequence is dCTP deaminase (176 aa).

DCTP contacts are provided by residues 99 to 104 and aspartate 115; that span reads RSTLAR. The active-site Proton donor/acceptor is glutamate 125. Glutamine 163 is a binding site for dCTP.

The protein belongs to the dCTP deaminase family. As to quaternary structure, homotrimer.

It catalyses the reaction dCTP + H2O + H(+) = dUTP + NH4(+). It functions in the pathway pyrimidine metabolism; dUMP biosynthesis; dUMP from dCTP (dUTP route): step 1/2. Its function is as follows. Catalyzes the deamination of dCTP to dUTP. The sequence is that of dCTP deaminase from Pyrobaculum aerophilum (strain ATCC 51768 / DSM 7523 / JCM 9630 / CIP 104966 / NBRC 100827 / IM2).